We begin with the raw amino-acid sequence, 260 residues long: Fibronectin type III domain-containing protein 5 (260 aa).

Positions 1-56 (MQAARGGAGRPERPGRPGRGPERERERPPGAGAASPCAAPGLPAGGATIHPGSPSA) are disordered. Basic and acidic residues predominate over residues 10–28 (RPERPGRPGRGPERERERP). The span at 29-56 (PGAGAASPCAAPGLPAGGATIHPGSPSA) shows a compositional bias: low complexity. The Fibronectin type-III domain occupies 84 to 175 (APVNVTVRHL…EPVLFKTPRE (92 aa)). N-linked (GlcNAc...) asparagine glycans are attached at residues asparagine 87 and asparagine 132. The helical transmembrane segment at 201–221 (GEVLIIVVVLFMWAGVIALFC) threads the bilayer. Positions 230 to 241 (NEPNNNKEKTKS) are enriched in basic and acidic residues. Residues 230–260 (NEPNNNKEKTKSASETSTPEHQGGGLLRSKI) are disordered. The span at 251 to 260 (QGGGLLRSKI) shows a compositional bias: gly residues. The short motif at 258-260 (SKI) is the Microbody targeting signal element.

As to quaternary structure, dimer; may exist in other oligomeric forms. Post-translationally, the extracellular domain is cleaved and released from the cell membrane. In terms of processing, N-Glycosylated. In terms of tissue distribution, widely expressed, with highest levels in heart. Very low expression, if any, in colon, pancreas and spleen.

Its subcellular location is the cell membrane. It is found in the peroxisome membrane. The protein resides in the secreted. In terms of biological role, mediates beneficial effects of muscular exercise. Induces browning of white adipose tissue by stimulating UCP1 expression, at least in part, via the nuclear receptor PPARA. The polypeptide is Fibronectin type III domain-containing protein 5 (FNDC5) (Homo sapiens (Human)).